A 290-amino-acid polypeptide reads, in one-letter code: 2-phosphoglycerate kinase (290 aa).

Residues 1-89 form the ATP-cone domain; it reads MIIVTDSERK…FWRELRRRKV (89 aa).

The protein belongs to the 2-phosphoglycerate kinase family. It depends on a divalent metal cation as a cofactor.

It catalyses the reaction (2R)-2-phosphoglycerate + ATP = (2R)-2,3-bisphosphoglycerate + ADP + H(+). It functions in the pathway thermoadapter biosynthesis; cyclic 2,3-diphosphoglycerate biosynthesis; cyclic 2,3-diphosphoglycerate from 2-phospho-D-glycerate: step 1/2. Its function is as follows. Catalyzes the phosphorylation of 2-phosphoglycerate to 2,3-diphosphoglycerate. Involved in the biosynthesis of cyclic 2,3-bisphosphoglycerate, a thermoprotectant. This Thermococcus kodakarensis (strain ATCC BAA-918 / JCM 12380 / KOD1) (Pyrococcus kodakaraensis (strain KOD1)) protein is 2-phosphoglycerate kinase.